Here is a 906-residue protein sequence, read N- to C-terminus: Coatomer subunit beta' (906 aa).

WD repeat units follow at residues 13–52 (ARSDRVKSVDLHPTEPWMLASLYNGSVCVWNHETQTLVKT), 55–94 (VCDLPVRAAKFVARKNWVVTGADDMQIRVFNYNTLERVHM), 97–136 (AHSDYIRCIAVHPTQPFILTSSDDMLIKLWDWDKKWSCSQ), 140–180 (GHTH…PNFT), 183–224 (GHEK…CVQT), and 227–266 (GHAQNVSCASFHPELPIIITGSEDGTVRIWHSSTYRLEST). At lysine 627 the chain carries N6-acetyllysine. Residues 837–870 (EEGKDFQPSRSTAQQELDGKPASPTPVIVASHTA) are disordered. Serine 859 is subject to Phosphoserine. Phosphothreonine is present on threonine 861. Positions 866 to 891 (ASHTANKEEKSLLELEVDLDNLELED) form a coiled coil.

This sequence belongs to the WD repeat COPB2 family. Oligomeric complex that consists of at least the alpha, beta, beta', gamma, delta, epsilon and zeta subunits. Probably interacts with PEX11A. Interacts with SCYL1. Interacts with JAGN1.

It localises to the cytoplasm. The protein resides in the cytosol. Its subcellular location is the golgi apparatus membrane. It is found in the cytoplasmic vesicle. The protein localises to the COPI-coated vesicle membrane. Its function is as follows. The coatomer is a cytosolic protein complex that binds to dilysine motifs and reversibly associates with Golgi non-clathrin-coated vesicles, which further mediate biosynthetic protein transport from the ER, via the Golgi up to the trans Golgi network. Coatomer complex is required for budding from Golgi membranes, and is essential for the retrograde Golgi-to-ER transport of dilysine-tagged proteins. In mammals, the coatomer can only be recruited by membranes associated to ADP-ribosylation factors (ARFs), which are small GTP-binding proteins; the complex also influences the Golgi structural integrity, as well as the processing, activity, and endocytic recycling of LDL receptors. This coatomer complex protein, essential for Golgi budding and vesicular trafficking, is a selective binding protein (RACK) for protein kinase C, epsilon type. It binds to Golgi membranes in a GTP-dependent manner. The polypeptide is Coatomer subunit beta' (COPB2) (Homo sapiens (Human)).